The chain runs to 142 residues: Large ribosomal subunit protein bL21 (142 aa).

Positions 73-84 are enriched in basic residues; that stretch reads KRRRQNSKRTRG. The interval 73 to 142 is disordered; the sequence is KRRRQNSKRT…KAAAKAESAE (70 aa). Residues 107–125 are compositionally biased toward basic and acidic residues; that stretch reads KAAEKKAPKADAAEGEAAK. Residues 126-135 show a composition bias toward basic residues; it reads PKKAAPKKAA.

This sequence belongs to the bacterial ribosomal protein bL21 family. In terms of assembly, part of the 50S ribosomal subunit. Contacts protein L20.

This protein binds to 23S rRNA in the presence of protein L20. This Brucella canis (strain ATCC 23365 / NCTC 10854 / RM-666) protein is Large ribosomal subunit protein bL21.